The primary structure comprises 525 residues: Cobyric acid synthase (525 aa).

The region spanning Glu251–Leu452 is the GATase cobBQ-type domain. Cys332 serves as the catalytic Nucleophile. His444 is a catalytic residue.

Belongs to the CobB/CobQ family. CobQ subfamily.

It participates in cofactor biosynthesis; adenosylcobalamin biosynthesis. Functionally, catalyzes amidations at positions B, D, E, and G on adenosylcobyrinic A,C-diamide. NH(2) groups are provided by glutamine, and one molecule of ATP is hydrogenolyzed for each amidation. In Pelotomaculum thermopropionicum (strain DSM 13744 / JCM 10971 / SI), this protein is Cobyric acid synthase.